Here is a 384-residue protein sequence, read N- to C-terminus: Putative spore germination protein YfkR (384 aa).

Positions methionine 1 to glycine 20 are cleaved as a signal peptide. Cysteine 21 carries the N-palmitoyl cysteine lipid modification. Cysteine 21 carries the S-diacylglycerol cysteine lipid modification.

This sequence belongs to the GerABKC lipoprotein family.

The protein localises to the cell membrane. May be involved in spore germination. This chain is Putative spore germination protein YfkR (yfkR), found in Bacillus subtilis (strain 168).